The sequence spans 205 residues: Small ribosomal subunit protein uS5 (205 aa).

One can recognise an S5 DRBM domain in the interval leucine 49 to valine 112.

This sequence belongs to the universal ribosomal protein uS5 family. In terms of assembly, part of the 30S ribosomal subunit. Contacts protein S4.

Its function is as follows. With S4 and S12 plays an important role in translational accuracy. This chain is Small ribosomal subunit protein uS5, found in Methanoregula boonei (strain DSM 21154 / JCM 14090 / 6A8).